The following is a 255-amino-acid chain: Hydroxyacylglutathione hydrolase (255 aa).

Residues H55, H57, D59, H60, H113, D132, and H170 each coordinate Zn(2+).

The protein belongs to the metallo-beta-lactamase superfamily. Glyoxalase II family. Monomer. Zn(2+) serves as cofactor.

It catalyses the reaction an S-(2-hydroxyacyl)glutathione + H2O = a 2-hydroxy carboxylate + glutathione + H(+). It functions in the pathway secondary metabolite metabolism; methylglyoxal degradation; (R)-lactate from methylglyoxal: step 2/2. Functionally, thiolesterase that catalyzes the hydrolysis of S-D-lactoyl-glutathione to form glutathione and D-lactic acid. The protein is Hydroxyacylglutathione hydrolase of Methylobacterium nodulans (strain LMG 21967 / CNCM I-2342 / ORS 2060).